Reading from the N-terminus, the 75-residue chain is Peptide Ctri10033 (75 aa).

The first 22 residues, 1 to 22 (MNSKYLFVFLILIVTFTDLCQG), serve as a signal peptide directing secretion. Arg43 carries the arginine amide modification. The propeptide occupies 47–75 (ELGSQYDYLQDFRKRELDLDDLLSKFPDY).

Belongs to the non-disulfide-bridged peptide (NDBP) superfamily. Short antimicrobial peptide (group 4) family. Expressed by the venom gland.

It is found in the secreted. The sequence is that of Peptide Ctri10033 from Chaerilus tricostatus (Scorpion).